The chain runs to 392 residues: Serpin B11 (392 aa).

The RCL stretch occupies residues 341 to 365 (EEGTEAAAATGDSIAVKSLPMRAQF).

Belongs to the serpin family. Ov-serpin subfamily. Detected in a restricted number of tissues, including lung, placenta, prostate, and tonsil.

The protein resides in the cytoplasm. Functionally, has no serine protease inhibitory activity, probably due to variants in the scaffold impairing conformational change. The sequence is that of Serpin B11 (SERPINB11) from Homo sapiens (Human).